A 113-amino-acid polypeptide reads, in one-letter code: Pancreatic progenitor cell differentiation and proliferation factor A (113 aa).

The protein belongs to the PPDPF family.

In terms of biological role, probable regulator of exocrine pancreas development. The protein is Pancreatic progenitor cell differentiation and proliferation factor A (ppdpf-a) of Xenopus laevis (African clawed frog).